We begin with the raw amino-acid sequence, 184 residues long: Dirigent protein 14 (184 aa).

A signal peptide spans 1–20 (MANQIYLFSLICLSVLLCQS). A disulfide bridge connects residues Cys-36 and Cys-182. Asn-55 and Asn-119 each carry an N-linked (GlcNAc...) asparagine glycan.

Belongs to the plant dirigent protein family. In terms of assembly, homodimer.

The protein localises to the secreted. The protein resides in the extracellular space. Its subcellular location is the apoplast. Functionally, dirigent proteins impart stereoselectivity on the phenoxy radical-coupling reaction, yielding optically active lignans from two molecules of coniferyl alcohol in the biosynthesis of lignans, flavonolignans, and alkaloids and thus plays a central role in plant secondary metabolism. In Arabidopsis thaliana (Mouse-ear cress), this protein is Dirigent protein 14 (DIR14).